The sequence spans 147 residues: Gastrula-specific protein 17 (147 aa).

A disordered region spans residues 1–119; sequence MSQNLDFLAL…TQVYGNHQPG (119 aa). Polar residues-rich tracts occupy residues 20-36, 45-57, and 74-88; these read SPTS…STPP, RQIS…YTNP, and LLQN…SPTA.

This is Gastrula-specific protein 17 (gs17) from Xenopus laevis (African clawed frog).